The sequence spans 246 residues: Probable transcriptional regulatory protein Ent638_2432 (246 aa).

Belongs to the TACO1 family.

Its subcellular location is the cytoplasm. The polypeptide is Probable transcriptional regulatory protein Ent638_2432 (Enterobacter sp. (strain 638)).